The sequence spans 322 residues: uncharacterized protein (322 aa).

Residues 212-234 form a helical membrane-spanning segment; that stretch reads VCALLVGAISVATAGAAFSIIIV.

Its subcellular location is the membrane. This is an uncharacterized protein from Rickettsia prowazekii (strain Madrid E).